Reading from the N-terminus, the 154-residue chain is Large ribosomal subunit protein uL30 (154 aa).

This sequence belongs to the universal ribosomal protein uL30 family. In terms of assembly, part of the 50S ribosomal subunit.

This is Large ribosomal subunit protein uL30 from Methanocaldococcus jannaschii (strain ATCC 43067 / DSM 2661 / JAL-1 / JCM 10045 / NBRC 100440) (Methanococcus jannaschii).